We begin with the raw amino-acid sequence, 42 residues long: Photosystem I reaction center subunit IX (42 aa).

The helical transmembrane segment at 7–27 (YLSAAPVLSTLWLGALAGLLI) threads the bilayer.

The protein belongs to the PsaJ family.

Its subcellular location is the plastid membrane. May help in the organization of the PsaE and PsaF subunits. The polypeptide is Photosystem I reaction center subunit IX (Cuscuta exaltata (Tall dodder)).